The primary structure comprises 153 residues: uncharacterized protein (153 aa).

Residue alanine 2 is modified to N-acetylalanine.

This is an uncharacterized protein from Arabidopsis thaliana (Mouse-ear cress).